A 236-amino-acid polypeptide reads, in one-letter code: Large ribosomal subunit protein uL3 (236 aa).

This sequence belongs to the universal ribosomal protein uL3 family. As to quaternary structure, part of the 50S ribosomal subunit. Forms a cluster with proteins L14 and L19.

One of the primary rRNA binding proteins, it binds directly near the 3'-end of the 23S rRNA, where it nucleates assembly of the 50S subunit. The sequence is that of Large ribosomal subunit protein uL3 from Anaeromyxobacter dehalogenans (strain 2CP-C).